Consider the following 684-residue polypeptide: Divalent metal cation transporter MntH (684 aa).

A disordered region spans residues 223–250 (PTAINAPSGTPAAGRTSPTPTTDSQRRS). Transmembrane regions (helical) follow at residues 283–303 (TSLKTSWYLLGPAFVAAIAYV), 318–340 (FGYLLLWVIVAANVMAALVQYLS), 365–387 (LAYWAQAEIVAMATDVAEVIGGA), 391–413 (RIMFNLPLPIGGIITGVVSLLLL), 427–446 (VITALLLVIAIGFTASFFVV), 467–489 (VLLAAAIMGATVMPHAVYLHSGL), 514–534 (VGLAMLIAGGVNAAMLLVAAL), 555–577 (TLGATIAVLFAVGLLASGLASSS), 597–616 (MLVRRLITLGPALAILTLGF), 621–643 (TLVLSQVVLSFGIPFAVLPLVKL), and 656–678 (HRATTWVGWVVAVMVSLLNVMLI).

In the C-terminal section; belongs to the NRAMP family.

It localises to the cell membrane. Its function is as follows. H(+)-stimulated, divalent metal cation uptake system. This Mycobacterium bovis (strain ATCC BAA-935 / AF2122/97) protein is Divalent metal cation transporter MntH (mntH).